The chain runs to 239 residues: Pyridoxine 5'-phosphate synthase (239 aa).

Asparagine 7 contacts 3-amino-2-oxopropyl phosphate. Residue 9-10 participates in 1-deoxy-D-xylulose 5-phosphate binding; that stretch reads DH. Arginine 18 contacts 3-amino-2-oxopropyl phosphate. Histidine 43 functions as the Proton acceptor in the catalytic mechanism. The 1-deoxy-D-xylulose 5-phosphate site is built by arginine 45 and histidine 50. Glutamate 70 serves as the catalytic Proton acceptor. A 1-deoxy-D-xylulose 5-phosphate-binding site is contributed by threonine 100. Histidine 191 serves as the catalytic Proton donor. 3-amino-2-oxopropyl phosphate contacts are provided by residues glycine 192 and 213 to 214; that span reads GH.

This sequence belongs to the PNP synthase family. Homooctamer; tetramer of dimers.

It is found in the cytoplasm. It catalyses the reaction 3-amino-2-oxopropyl phosphate + 1-deoxy-D-xylulose 5-phosphate = pyridoxine 5'-phosphate + phosphate + 2 H2O + H(+). The protein operates within cofactor biosynthesis; pyridoxine 5'-phosphate biosynthesis; pyridoxine 5'-phosphate from D-erythrose 4-phosphate: step 5/5. In terms of biological role, catalyzes the complicated ring closure reaction between the two acyclic compounds 1-deoxy-D-xylulose-5-phosphate (DXP) and 3-amino-2-oxopropyl phosphate (1-amino-acetone-3-phosphate or AAP) to form pyridoxine 5'-phosphate (PNP) and inorganic phosphate. The sequence is that of Pyridoxine 5'-phosphate synthase from Nostoc sp. (strain PCC 7120 / SAG 25.82 / UTEX 2576).